The following is a 184-amino-acid chain: GTP-binding protein Rheb (184 aa).

A Glycyl lysine isopeptide (Lys-Gly) (interchain with G-Cter in ubiquitin) cross-link involves residue lysine 8. 8 residues coordinate GDP: serine 16, valine 17, glycine 18, lysine 19, serine 20, serine 21, valine 32, and aspartate 33. Residues serine 16, valine 17, glycine 18, lysine 19, serine 20, serine 21, valine 32, aspartate 33, tyrosine 35, proline 37, threonine 38, glycine 63, asparagine 119, lysine 120, and aspartate 122 each contribute to the GTP site. Serine 20 is a binding site for Mg(2+). Residues 35–43 (YDPTIENTF) carry the Effector region motif. Mg(2+) is bound at residue threonine 38. Asparagine 119 contacts GDP. Position 122 (aspartate 122) interacts with GDP. At serine 130 the chain carries Phosphoserine; by MAPKAPK5. Alanine 150 is a GDP binding site. Alanine 150 contributes to the GTP binding site. At cysteine 181 the chain carries Cysteine methyl ester. Cysteine 181 carries the S-farnesyl cysteine lipid modification. Positions 182-184 (SVM) are cleaved as a propeptide — removed in mature form.

It belongs to the small GTPase superfamily. Rheb family. As to quaternary structure, associates with the mTORC1 complex (MTOR, MLST8 and RPTOR) in a guanyl nucleotide-independent manner. Interacts with TSC2. Interacts with MCRS1; the interaction maintains RHEB at the lysosome in its active GTP-bound form and prevents its interaction with the mTORC1 complex inhibitor TSC2, ensuring activation of the mTORC1 complex by RHEB. Interacts (when prenylated) with PDE6D; this promotes release from membranes. In terms of processing, farnesylation is important for efficiently activating mTORC1-mediated signaling. Post-translationally, polyubiquitinated in response to amino acid, promoting its interaction with MTOR and mTORC1 activation. Deubiquitination by ATXN3 promotes recruitment of the TSC-TBC complex and RHEB inactivation by TSC2. Monoubiquitinated at Lys-8 by RNF152, promoting its association with the TSC-TBC complex. Deubiquitinated at Lys-8 by USP4, promoting mTORC1 activation. Phosphorylation by MAPKAPK5 impairs GTP-binding and inactivation.

The protein resides in the endomembrane system. It is found in the lysosome membrane. Its subcellular location is the golgi apparatus membrane. The protein localises to the endoplasmic reticulum membrane. It localises to the cytoplasm. The protein resides in the cytosol. It carries out the reaction GTP + H2O = GDP + phosphate + H(+). Its activity is regulated as follows. Alternates between an inactive form bound to GDP and an active form bound to GTP. Inactivated by the TSC-TBC complex via the GTPase activating protein (GAP) domain of TSC2. Autoinhibited by Tyr-35, which constrains the active site conformation, restricting the access of the catalytic Asp-65 to the nucleotide-binding pocket. Small GTPase that acts as an allosteric activator of the canonical mTORC1 complex, an evolutionarily conserved central nutrient sensor that stimulates anabolic reactions and macromolecule biosynthesis to promote cellular biomass generation and growth. In response to nutrients, growth factors or amino acids, specifically activates the protein kinase activity of MTOR, the catalytic component of the mTORC1 complex: acts by causing a conformational change that allows the alignment of residues in the active site of MTOR, thereby enhancing the phosphorylation of ribosomal protein S6 kinase (RPS6KB1 and RPS6KB2) and EIF4EBP1 (4E-BP1). RHEB is also required for localization of the TSC-TBC complex to lysosomal membranes. In response to starvation, RHEB is inactivated by the TSC-TBC complex, preventing activation of mTORC1. Has low intrinsic GTPase activity. In Mus musculus (Mouse), this protein is GTP-binding protein Rheb.